Here is a 328-residue protein sequence, read N- to C-terminus: Probable membrane-associated kinase regulator 4 (328 aa).

The disordered stretch occupies residues 213-253; sequence GQIKTERPKKQSNGSVSGSHRRSFSVSMRRQAAKSSNNKSS. Positions 223–240 are enriched in polar residues; that stretch reads QSNGSVSGSHRRSFSVSM.

It is found in the cell membrane. In Arabidopsis thaliana (Mouse-ear cress), this protein is Probable membrane-associated kinase regulator 4 (MAKR4).